The primary structure comprises 635 residues: tRNA 5-methylaminomethyl-2-thiouridine biosynthesis bifunctional protein MnmC (635 aa).

The segment at 1-231 is tRNA (mnm(5)s(2)U34)-methyltransferase; it reads MPITPASLSF…KRQMLRGRYL (231 aa). The interval 249 to 635 is FAD-dependent cmnm(5)s(2)U34 oxidoreductase; it reads IGAGVAGTSI…RPARTLRGED (387 aa).

The protein in the N-terminal section; belongs to the methyltransferase superfamily. tRNA (mnm(5)s(2)U34)-methyltransferase family. It in the C-terminal section; belongs to the DAO family. The cofactor is FAD.

It localises to the cytoplasm. It catalyses the reaction 5-aminomethyl-2-thiouridine(34) in tRNA + S-adenosyl-L-methionine = 5-methylaminomethyl-2-thiouridine(34) in tRNA + S-adenosyl-L-homocysteine + H(+). Functionally, catalyzes the last two steps in the biosynthesis of 5-methylaminomethyl-2-thiouridine (mnm(5)s(2)U) at the wobble position (U34) in tRNA. Catalyzes the FAD-dependent demodification of cmnm(5)s(2)U34 to nm(5)s(2)U34, followed by the transfer of a methyl group from S-adenosyl-L-methionine to nm(5)s(2)U34, to form mnm(5)s(2)U34. The chain is tRNA 5-methylaminomethyl-2-thiouridine biosynthesis bifunctional protein MnmC from Azoarcus sp. (strain BH72).